The following is a 64-amino-acid chain: Defensin-like protein 41 (64 aa).

Positions 1-21 are disordered; the sequence is MTQGKRKHPCDLKNPSKRAPP. Cystine bridges form between Cys-10–Cys-61, Cys-24–Cys-47, Cys-33–Cys-56, and Cys-37–Cys-58.

This sequence belongs to the DEFL family.

The sequence is that of Defensin-like protein 41 from Arabidopsis thaliana (Mouse-ear cress).